Reading from the N-terminus, the 525-residue chain is MAILSSALVTIDLPVTLVSLLVGSIFYFCYLTVYRLFLSPIAHFPGPKLAAWTYWYEFWYDVIAEPEYTFKIGRLHKIYGPVVRINPDEIHIADPDFYDTIYAGSGRKRDKWDWITRSFGVDESLIGTLKHDEHRVRRASLSPYFSKQSVRALQPLIDRNMAILLDRLREFAKSGSPLKLDDAYAALTNDIVEDYAFGRSDHRLEAPDFDPSFRDAMLQGGKAGHVLKHFTWLMDLLKKLPDSLLLKLSPAMGAYSQLQTSVKRQVAEIQHAHQMHTYDKTRRTIFHEILNSKLSDYDKSTDRLWQEGEVVVAAGTITTAWALGVSTYFVLATPDILRKLKTELEAAIPDPSQPLNLITLEALPFLTGVVQEGVRLSHAISHRLHRICPDETLIYQDNDNQREWRIPPGTPLSMTSNLVHHDERVFPDSHAFKPERWLDNARLERYLVSFGKGGRACLGINLAYAELYLTLAALFRVYGTEQVKGKDDVGTLQLFETSAADLVITSDTVVPVMPEDSKGLRVKVS.

A helical membrane pass occupies residues 13–33 (LPVTLVSLLVGSIFYFCYLTV). Position 457 (C457) interacts with heme.

This sequence belongs to the cytochrome P450 family. It depends on heme as a cofactor.

It is found in the membrane. Its pathway is secondary metabolite biosynthesis; terpenoid biosynthesis. Cytochrome P450 monooxygenase; part of the gene cluster that mediates the biosynthesis of terpestacin. The bifunctional terpene synthase tpcA converts isopentenyl diphosphate (IPP) and dimethylallyl diphosphate (DMAPP) into the sesterterpene preterpestacin I. The C-terminal prenyltransferase (PT) domain of tpcA catalyzes formation of GFPP, whereas the N-terminal terpene cyclase (TC) domain catalyzes the cyclization of GFPP into preterpestacin I. The cytochrome P450 monooxygenase tpcB then hydroxylates preterpestacin I to yield 24-hydroxypreterpstacin I (renamed as preterpestacin II) whereas the cytochrome P450 monooxygenase tpcC further hydroxylates preterpestacin II to yield 16,17-dihydroxypreterpestacin II (renamed as preterpestacin III). Finally, the FAD-dependent monooxygenase tpcD converts preterpestacin III into terpestacin. The protein is Cytochrome P450 monooxygenase tpcC of Cochliobolus heterostrophus (strain C5 / ATCC 48332 / race O) (Southern corn leaf blight fungus).